The sequence spans 713 residues: Polyribonucleotide nucleotidyltransferase (713 aa).

Residues Asp-491 and Asp-497 each coordinate Mg(2+). The KH domain occupies 558 to 617; sequence PRMITIKINPEKIRDVIGKGGSVIRALTEETGTTIDISDDGVVTIASTSSDGMAEAKKRI. Positions 627-695 constitute an S1 motif domain; that stretch reads GQVYEGTVLK…EKGRVRLSAK (69 aa).

This sequence belongs to the polyribonucleotide nucleotidyltransferase family. The cofactor is Mg(2+).

It is found in the cytoplasm. The enzyme catalyses RNA(n+1) + phosphate = RNA(n) + a ribonucleoside 5'-diphosphate. Its function is as follows. Involved in mRNA degradation. Catalyzes the phosphorolysis of single-stranded polyribonucleotides processively in the 3'- to 5'-direction. The sequence is that of Polyribonucleotide nucleotidyltransferase from Burkholderia cenocepacia (strain ATCC BAA-245 / DSM 16553 / LMG 16656 / NCTC 13227 / J2315 / CF5610) (Burkholderia cepacia (strain J2315)).